A 113-amino-acid polypeptide reads, in one-letter code: uncharacterized protein (113 aa).

The protein resides in the cytoplasm. It is found in the nucleus. This is an uncharacterized protein from Saccharomyces cerevisiae (strain ATCC 204508 / S288c) (Baker's yeast).